A 134-amino-acid chain; its full sequence is Acyl carrier protein, mitochondrial (134 aa).

The N-terminal 46 residues, 1–46 (MFRTAALTAARVARPAVASAVRAGVARPAFVQAVPKVAAFQAVRFY), are a transit peptide targeting the mitochondrion. Positions 55–131 (DEVFSRIAQV…KAVEYILSQP (77 aa)) constitute a Carrier domain. Serine 91 is modified (O-(pantetheine 4'-phosphoryl)serine).

This sequence belongs to the acyl carrier protein (ACP) family. As to quaternary structure, complex I is composed of about 30 different subunits. 4'-phosphopantetheine is transferred from CoA to a specific serine of apo-ACP by acpS. This modification is essential for activity because fatty acids are bound in thioester linkage to the sulfhydryl of the prosthetic group.

The protein localises to the mitochondrion. It functions in the pathway lipid metabolism; fatty acid biosynthesis. In terms of biological role, carrier of the growing fatty acid chain in fatty acid biosynthesis. May be involved in the synthesis of very-long-chain fatty acids. Accessory and non-catalytic subunit of the mitochondrial membrane respiratory chain NADH dehydrogenase (Complex I), which functions in the transfer of electrons from NADH to the respiratory chain. In Neurospora crassa (strain ATCC 24698 / 74-OR23-1A / CBS 708.71 / DSM 1257 / FGSC 987), this protein is Acyl carrier protein, mitochondrial (nuo-12).